Here is a 917-residue protein sequence, read N- to C-terminus: MAASVDNRQYARLEPGLNGVVRSYKPPVPGRSDSPKAHQNQTTNQTVFLKPAKVHDDDEDVSSEDENETHNSNAVYYKEMIRKSNAELEPSVLDPRDEYTADSWIERNPSMVRLTGKHPFNSEAPLNRLMHHGFITPVPLHYVRNHGHVPKAQWAEWTVEVTGFVKRPMKFTMDQLVSEFAYREFAATLVCAGNRRKEQNMVKKSKGFNWGSAGVSTSVWRGVPLCDVLRRCGIFSRKGGALNVCFEGSEDLPGGAGTAGSKYGTSIKKEYAMDPSRDIILAYMQNGEYLTPDHGFPVRIIIPGFIGGRMVKWLKRIIVTTKESDNFYHFKDNRVLPSLVDAELADEEGWWYKPEYIINELNINSVITTPCHEEILPINAFTTQRPYTLKGYAYSGGGKKVTRVEVTVDGGETWNVCALDHQEKPNKYGKFWCWCFWSLEVEVLDLLSAKEIAVRAWDETLNTQPEKMIWNLMGMMNNCWFRVKTNVCKPHKGEIGIVFEHPTLPGNESGGWMAKERHLEKSADAPPSLKKSVSTPFMNTTAKMYSMSEVKKHNSADSCWIIVHGHIYDCTRFLMDHPGGSDSILINAGTDCTEEFEAIHSDKAKKMLEDYRIGELITTGYSSDSSSPNNSVHGSSAVFSLLAPIGEATPVRNLALVNPRAKVPVQLVEKTSISHDVRKFRFALPVEDMVLGLPVGKHIFLCATINDKLCLRAYTPSSTVDVVGYFELVVKIYFGGVHPRFPNGGLMSQYLDSLPIGSTLEIKGPLGHVEYLGKGSFTVHGKPKFADKLAMLAGGTGITPVYQIIQAILKDPEDETEMYVIYANRTEEDILLREELDGWAEQYPDRLKVWYVVESAKEGWAYSTGFISEAIMREHIPDGLDGSALAMACGPPPMIQFAVQPNLEKMQYNIKEDFLIF.

The tract at residues 1 to 72 (MAASVDNRQY…SEDENETHNS (72 aa)) is disordered. Residues 37 to 47 (AHQNQTTNQTV) show a composition bias toward polar residues. A compositionally biased stretch (acidic residues) spans 57-67 (DDEDVSSEDEN). Mo-molybdopterin is bound at residue Cys-191. One can recognise a Cytochrome b5 heme-binding domain in the interval 542 to 617 (AKMYSMSEVK…LEDYRIGELI (76 aa)). 2 residues coordinate heme: His-577 and His-600. In terms of domain architecture, FAD-binding FR-type spans 660-772 (RAKVPVQLVE…KGPLGHVEYL (113 aa)). FAD-binding positions include 712–715 (RAYT), 729–733 (VVKIY), Phe-734, Phe-741, 746–748 (LMS), and Thr-799.

This sequence belongs to the nitrate reductase family. In terms of assembly, homodimer. FAD serves as cofactor. Requires heme as cofactor. The cofactor is Mo-molybdopterin. In terms of tissue distribution, root, leaf, and shoot.

The catalysed reaction is nitrite + NAD(+) + H2O = nitrate + NADH + H(+). Functionally, nitrate reductase is a key enzyme involved in the first step of nitrate assimilation in plants, fungi and bacteria. This Arabidopsis thaliana (Mouse-ear cress) protein is Nitrate reductase [NADH] 2 (NIA2).